We begin with the raw amino-acid sequence, 414 residues long: MAKPSRGRRSPSVSGSSSRSSSRSRSGSSPSRSISRSRSRSRSLSSSSSPSRSVSSGSRSPPRRGKSPAGPARRGRSPPPPPSKGASSPSKKAVQESLVLHVDSLSRNVNEAHLKEIFGNFGEVIHVEIAMDRAVNLPRGHGYVEFKARADAEKAQLYMDGAQIDGKVVKATFTLPPRQKVSSPPKPVSAAPKRDAPKSDNAAADAEKDGGPRRPRETSPQRKTGLSPRRRSPLPRRGLSPRRRSPDSPHRRRPGSPIRRRGDTPPRRRPASPSRGRSPSSPPPRRYRSPPRGSPRRIRGSPVRRRSPLPLRRRSPPPRRLRSPPRRSPIRRRSRSPIRRPGRSRSSSISPRKGRGPAGRRGRSSSYSSSPSPRRIPRKISRSRSPKRPLRGKRSSSNSSSSSSPPPPPPPRKT.

2 disordered regions span residues 1-95 (MAKP…KAVQ) and 175-414 (LPPR…PRKT). Low complexity-rich tracts occupy residues 10–34 (SPSV…SRSI) and 42–60 (RSLS…GSRS). The short motif at 62–69 (PRRGKSPA) is the Nuclear localization signal 1 element. Ser77 carries the phosphoserine modification. The RRM domain occupies 98–176 (LVLHVDSLSR…KVVKATFTLP (79 aa)). Positions 176–191 (PPRQKVSSPPKPVSAA) are enriched in low complexity. Positions 205 to 220 (DAEKDGGPRRPRETSP) are enriched in basic and acidic residues. Residues 218–219 (TS) are required for isoform 1 function in petal development. Positions 228–243 (PRRRSPLPRRGLSPRR) are enriched in basic residues. The Nuclear localization signal 2 signature appears at 229-236 (RRRSPLPR). Ser256 carries the phosphoserine modification. 3 consecutive short sequence motifs (nuclear localization signal) follow at residues 284–291 (PRRYRSPP), 318–325 (PRRLRSPP), and 338–345 (IRRPGRSR). Composition is skewed to basic residues over residues 285 to 343 (RRYR…RPGR) and 352 to 363 (RKGRGPAGRRGR). A compositionally biased stretch (low complexity) spans 364–373 (SSSYSSSPSP). A Nuclear localization signal 6 motif is present at residues 373–380 (PRRIPRKI). Residues 375–394 (RIPRKISRSRSPKRPLRGKR) are compositionally biased toward basic residues. Pro residues predominate over residues 404 to 414 (SPPPPPPPRKT).

It belongs to the splicing factor SR family. SR45 subfamily. Component of the spliceosome. Interacts with AFC2, U2AF35A, U2AF35B, RNU1, SCL33 and SKIP. The interaction with AFC2 depends on phosphorylation status. Interaction with RNU1 defines initial 5' splice sites and interaction with U2AF35B 3' splice sites in the early stage of spliceosome assembly. Post-translationally, phosphorylated by AFC2. The phosphorylation status regulates intranuclear distribution. Especially present in actively growing regions and dividing cells. Mostly expressed in roots (primary and secondary root meristem), shoot apical meristem (SAM), leaf primordia, pollen and inflorescence, and, to a lower extent, in leaves, vascular tissue, hydathode and fruits.

It localises to the nucleus speckle. The protein resides in the nucleus. It is found in the nucleoplasm. Involved in 5' and 3' splicing site selection of introns, and may bridge the 5' and 3' components of the spliceosome. Isoform 1 is required during flower petal development and isoform 2 is involved in root growth. Negatively regulates glucose and abscisic acid (ABA) signaling during early seedling development. Involved in the RNA-directed DNA methylation pathway. Modulates KIN10 stability in response to sugars, probably through the splicing regulation of 5PTASE13, a protein implicated in the proteasomal degradation of KIN10. This is Serine/arginine-rich splicing factor SR45 from Arabidopsis thaliana (Mouse-ear cress).